A 195-amino-acid chain; its full sequence is Glycerol-3-phosphate acyltransferase (195 aa).

5 consecutive transmembrane segments (helical) span residues 3-23 (IHAV…GLIL), 53-73 (AVMT…LAKI), 80-100 (FAFI…WLLF), 115-135 (LIEY…FAIF), and 147-167 (IFVA…VFIA).

The protein belongs to the PlsY family. In terms of assembly, probably interacts with PlsX.

It localises to the cell inner membrane. The enzyme catalyses an acyl phosphate + sn-glycerol 3-phosphate = a 1-acyl-sn-glycero-3-phosphate + phosphate. It participates in lipid metabolism; phospholipid metabolism. In terms of biological role, catalyzes the transfer of an acyl group from acyl-phosphate (acyl-PO(4)) to glycerol-3-phosphate (G3P) to form lysophosphatidic acid (LPA). This enzyme utilizes acyl-phosphate as fatty acyl donor, but not acyl-CoA or acyl-ACP. The protein is Glycerol-3-phosphate acyltransferase of Ehrlichia chaffeensis (strain ATCC CRL-10679 / Arkansas).